Here is a 338-residue protein sequence, read N- to C-terminus: N-acetyl-gamma-glutamyl-phosphate reductase (338 aa).

Cys148 is an active-site residue.

This sequence belongs to the NAGSA dehydrogenase family. Type 1 subfamily.

The protein localises to the cytoplasm. It carries out the reaction N-acetyl-L-glutamate 5-semialdehyde + phosphate + NADP(+) = N-acetyl-L-glutamyl 5-phosphate + NADPH + H(+). The protein operates within amino-acid biosynthesis; L-arginine biosynthesis; N(2)-acetyl-L-ornithine from L-glutamate: step 3/4. Catalyzes the NADPH-dependent reduction of N-acetyl-5-glutamyl phosphate to yield N-acetyl-L-glutamate 5-semialdehyde. The polypeptide is N-acetyl-gamma-glutamyl-phosphate reductase (Leptospira interrogans serogroup Icterohaemorrhagiae serovar Lai (strain 56601)).